The following is a 39-amino-acid chain: Photosystem II reaction center protein J (39 aa).

A helical transmembrane segment spans residues 7–27 (IPLWIVATVAGTGALVVVGLF).

This sequence belongs to the PsbJ family. In terms of assembly, PSII is composed of 1 copy each of membrane proteins PsbA, PsbB, PsbC, PsbD, PsbE, PsbF, PsbH, PsbI, PsbJ, PsbK, PsbL, PsbM, PsbT, PsbX, PsbY, PsbZ, Psb30/Ycf12, peripheral proteins PsbO, CyanoQ (PsbQ), PsbU, PsbV and a large number of cofactors. It forms dimeric complexes.

It localises to the cellular thylakoid membrane. Functionally, one of the components of the core complex of photosystem II (PSII). PSII is a light-driven water:plastoquinone oxidoreductase that uses light energy to abstract electrons from H(2)O, generating O(2) and a proton gradient subsequently used for ATP formation. It consists of a core antenna complex that captures photons, and an electron transfer chain that converts photonic excitation into a charge separation. This Synechococcus sp. (strain ATCC 27144 / PCC 6301 / SAUG 1402/1) (Anacystis nidulans) protein is Photosystem II reaction center protein J.